The sequence spans 228 residues: 2,3-bisphosphoglycerate-dependent phosphoglycerate mutase (228 aa).

Substrate-binding positions include 7-14 (RHGESAWN), 20-21 (TG), Arg-59, 86-89 (ERHY), Lys-97, 113-114 (RR), and 182-183 (GN). His-8 (tele-phosphohistidine intermediate) is an active-site residue. Glu-86 acts as the Proton donor/acceptor in catalysis.

This sequence belongs to the phosphoglycerate mutase family. BPG-dependent PGAM subfamily.

It catalyses the reaction (2R)-2-phosphoglycerate = (2R)-3-phosphoglycerate. It functions in the pathway carbohydrate degradation; glycolysis; pyruvate from D-glyceraldehyde 3-phosphate: step 3/5. Catalyzes the interconversion of 2-phosphoglycerate and 3-phosphoglycerate. The sequence is that of 2,3-bisphosphoglycerate-dependent phosphoglycerate mutase from Fusobacterium nucleatum subsp. nucleatum (strain ATCC 25586 / DSM 15643 / BCRC 10681 / CIP 101130 / JCM 8532 / KCTC 2640 / LMG 13131 / VPI 4355).